The chain runs to 304 residues: D-alanine--D-alanine ligase (304 aa).

One can recognise an ATP-grasp domain in the interval 103 to 299 (KLIWQALGLP…FADLCIEILK (197 aa)). 129–184 (EEKLGLPMFVKPAAEGSSVGVVKVKGKGRLKSVYEELKHLQGEIIAERFIGGGEYS) provides a ligand contact to ATP. Mg(2+) contacts are provided by Asp253, Glu266, and Asn268.

It belongs to the D-alanine--D-alanine ligase family. Mg(2+) serves as cofactor. The cofactor is Mn(2+).

It is found in the cytoplasm. The enzyme catalyses 2 D-alanine + ATP = D-alanyl-D-alanine + ADP + phosphate + H(+). The protein operates within cell wall biogenesis; peptidoglycan biosynthesis. Its function is as follows. Cell wall formation. The chain is D-alanine--D-alanine ligase from Neisseria meningitidis serogroup B (strain ATCC BAA-335 / MC58).